Consider the following 722-residue polypeptide: ORC ubiquitin ligase 1 (722 aa).

The RING-type; degenerate zinc finger occupies 18 to 56 (CHICLGKVRQPVVCTNNHVFCSICIDLWLKNNSQCPACR). Coiled-coil stretches lie at residues 87 to 129 (LRKT…TILD) and 157 to 267 (VVEW…KEDV). S210 is subject to Phosphoserine. A disordered region spans residues 273–359 (RAPSADSKGP…RLGARETPMD (87 aa)). Over residues 302–319 (AGSASASHLASPSSSRLA) the composition is skewed to low complexity. Over residues 323–338 (SVRQESTSRTEPNCPQ) the composition is skewed to polar residues. The segment covering 339–359 (NKDRYPKPTEPRLGARETPMD) has biased composition (basic and acidic residues). Phosphoserine occurs at positions 522, 549, 557, 564, and 566. The segment covering 541-555 (MSESDNSKSPCNNGF) has biased composition (polar residues). Disordered stretches follow at residues 541 to 585 (MSES…GSKL) and 691 to 722 (VPEK…ATKS). Residues 571–581 (EFLEEPDKLQE) are compositionally biased toward basic and acidic residues. Residues 698–722 (NGNQSTKRKIQSSLANASPSKATKS) show a composition bias toward polar residues. Residues S715 and S717 each carry the phosphoserine modification.

In terms of assembly, associates with ORC complex. Binds to chromatin; association is cell cycle-regulated, absent from mitotic chromosomes, is associated with chromatin from G1 and partially released from chromatin from mid S-phase. Post-translationally, auto-ubiquitinated.

It is found in the chromosome. The catalysed reaction is S-ubiquitinyl-[E2 ubiquitin-conjugating enzyme]-L-cysteine + [acceptor protein]-L-lysine = [E2 ubiquitin-conjugating enzyme]-L-cysteine + N(6)-ubiquitinyl-[acceptor protein]-L-lysine.. In terms of biological role, E3 ubiquitin ligase essential for DNA replication origin activation during S phase. Acts as a replication origin selector which selects the origins to be fired and catalyzes the multi-mono-ubiquitination of a subset of chromatin-bound ORC3 and ORC5 during S-phase. The protein is ORC ubiquitin ligase 1 of Mus musculus (Mouse).